The primary structure comprises 1061 residues: Transcription factor GTE10 (1061 aa).

Disordered stretches follow at residues Glu-32 to Val-56 and Asn-106 to Val-152. Basic and acidic residues predominate over residues Ser-109–Pro-118. One can recognise a Bromo domain in the interval Tyr-156 to Ile-262. An NET domain is found at Lys-304 to Met-386. 4 disordered regions span residues Ala-443–Leu-518, Val-538–Arg-558, Lys-606–Ala-645, and His-710–Lys-1033. The segment covering Glu-448 to Thr-476 has biased composition (low complexity). Residues Asp-477–Ser-506 show a composition bias toward basic and acidic residues. Residues Pro-588–Gly-658 adopt a coiled-coil conformation. 5 stretches are compositionally biased toward basic and acidic residues: residues Arg-733–Gly-755, Glu-770–Leu-792, Glu-828–Arg-852, Val-860–Gln-883, and Leu-912–Gly-929. Residues Arg-852–Ser-893 are a coiled coil. A compositionally biased stretch (polar residues) spans Leu-940–Gly-949. Composition is skewed to basic and acidic residues over residues Glu-952–Gly-962 and Gly-990–Glu-1002.

Interacts with TIP/NAC091. As to expression, widely expressed in all tissues.

The protein localises to the nucleus. Functionally, acts as a negative regulator in plant response to changes in environmental conditions through the control of ABA-regulated gene expression. The chain is Transcription factor GTE10 (GTE10) from Arabidopsis thaliana (Mouse-ear cress).